We begin with the raw amino-acid sequence, 132 residues long: Agouti-signaling protein (132 aa).

Residues 1–22 (MDVTRLLLATLLVFLCFFTANS) form the signal peptide. Asparagine 39 carries N-linked (GlcNAc...) asparagine glycosylation. The interval 61-87 (QIGRKEAEKKRSSKKEASMKKVARPRT) is disordered. Positions 63-79 (GRKEAEKKRSSKKEASM) are enriched in basic and acidic residues. Disulfide bonds link cysteine 93/cysteine 108, cysteine 100/cysteine 114, cysteine 107/cysteine 125, cysteine 111/cysteine 132, and cysteine 116/cysteine 123. Residues 93–132 (CVATRNSCKPPAPACCDPCASCQCRFFRSACSCRVLSLNC) form the Agouti domain.

The protein localises to the secreted. Involved in the regulation of melanogenesis. The binding of ASP to MC1R precludes alpha-MSH initiated signaling and thus blocks production of cAMP, leading to a down-regulation of eumelanogenesis (brown/black pigment) and thus increasing synthesis of pheomelanin (yellow/red pigment). The protein is Agouti-signaling protein (ASIP) of Gorilla gorilla gorilla (Western lowland gorilla).